A 239-amino-acid chain; its full sequence is Probable 2-phosphosulfolactate phosphatase (239 aa).

Belongs to the ComB family. It depends on Mg(2+) as a cofactor.

It catalyses the reaction (2R)-O-phospho-3-sulfolactate + H2O = (2R)-3-sulfolactate + phosphate. The sequence is that of Probable 2-phosphosulfolactate phosphatase from Clostridium botulinum (strain Loch Maree / Type A3).